Here is a 348-residue protein sequence, read N- to C-terminus: Protein pelota homolog (348 aa).

This sequence belongs to the eukaryotic release factor 1 family. Pelota subfamily. In terms of assembly, monomer. It depends on a divalent metal cation as a cofactor.

The protein resides in the cytoplasm. Functionally, may function in recognizing stalled ribosomes, interact with stem-loop structures in stalled mRNA molecules, and effect endonucleolytic cleavage of the mRNA. May play a role in the release non-functional ribosomes and degradation of damaged mRNAs. Has endoribonuclease activity. The polypeptide is Protein pelota homolog (Methanococcus aeolicus (strain ATCC BAA-1280 / DSM 17508 / OCM 812 / Nankai-3)).